A 951-amino-acid polypeptide reads, in one-letter code: Kinase suppressor of Ras 2 (951 aa).

The disordered stretch occupies residues 237–298; that stretch reads PPPPPLESGH…PGTPPPSSRK (62 aa). A compositionally biased stretch (low complexity) spans 260–274; sequence RTPPRTPNIVTTVTP. Residues Thr-273 and Thr-277 each carry the phosphothreonine modification. The segment at 413–457 adopts a Phorbol-ester/DAG-type zinc-finger fold; that stretch reads KHRFSTKYWMSQTCTVCGKGMLFGLKCKNCKLKCHNKCTKEAPPC. Zn(2+) is bound by residues His-414, Cys-426, Cys-429, Cys-439, Cys-442, His-447, Cys-450, and Cys-457. Ser-475 is modified (phosphoserine; by MARK3). Disordered regions lie at residues 489–559 and 614–634; these read RYSD…QKKN and EPTSENEESHNEAEESEDEFE. Residues 494-503 show a composition bias toward polar residues; that stretch reads HISQTLPKTN. Position 498 is a phosphothreonine (Thr-498). Over residues 518–531 the composition is skewed to low complexity; it reads SSSNPSSTTSSTPS. The span at 532–552 shows a compositional bias: pro residues; sequence SPAPPLPPSATPPSPLHPSPQ. The region spanning 667 to 932 is the Protein kinase domain; it reads LEIGELIGKG…TKLMDMLEKL (266 aa). 673 to 681 is an ATP binding site; that stretch reads IGKGRFGQV. Asp-787 acts as the Proton donor/acceptor in catalysis. ATP-binding residues include Lys-789 and Asp-804.

This sequence belongs to the protein kinase superfamily. TKL Ser/Thr protein kinase family. Heterodimerizes (via N-terminus) with BRAF (via N-terminus) in a MAP2K1/MEK1-dependent manner. Interacts with BRAF; this increases the low intrinsic protein kinase activity of KSR2. Interacts with MAP2K1, forming a heterodimer that can dimerize to form a heterotetramer. Interacts with MAP3K8, MAPK, RAS and RAF. Post-translationally, phosphorylated on Ser-475 by MARK3.

It localises to the cytoplasm. Its subcellular location is the membrane. It catalyses the reaction L-seryl-[protein] + ATP = O-phospho-L-seryl-[protein] + ADP + H(+). It carries out the reaction L-threonyl-[protein] + ATP = O-phospho-L-threonyl-[protein] + ADP + H(+). Functionally, location-regulated scaffold connecting MEK to RAF. Has very low protein kinase activity and can phosphorylate MAP2K1 at several Ser and Thr residues with very low efficiency (in vitro). Acts as MAP2K1/MEK1-dependent allosteric activator of BRAF; upon binding to MAP2K1/MEK1, dimerizes with BRAF and promotes BRAF-mediated phosphorylation of MAP2K1/MEK1. Interaction with BRAF enhances KSR2-mediated phosphorylation of MAP2K1 (in vitro). Blocks MAP3K8 kinase activity and MAP3K8-mediated signaling. Acts as a negative regulator of MAP3K3-mediated activation of ERK, JNK and NF-kappa-B pathways, inhibiting MAP3K3-mediated interleukin-8 production. In Mus musculus (Mouse), this protein is Kinase suppressor of Ras 2.